The sequence spans 466 residues: Amidase (466 aa).

Residues Lys-79 and Ser-148 each act as charge relay system in the active site. Positions 128 to 152 (YGRITPKSRNPRDPGRTPGGSSGGS) are disordered. Catalysis depends on Ser-172, which acts as the Acyl-ester intermediate.

This sequence belongs to the amidase family.

It carries out the reaction a monocarboxylic acid amide + H2O = a monocarboxylate + NH4(+). The chain is Amidase from Pseudomonas putida (Arthrobacter siderocapsulatus).